Reading from the N-terminus, the 265-residue chain is 2-Cys peroxiredoxin BAS1, chloroplastic (265 aa).

Residues 1–65 constitute a chloroplast transit peptide; sequence MACVASSTTL…SSTSRRSFAV (65 aa). The Thioredoxin domain occupies 73 to 232; sequence PLVGNKAPDF…TMRTLQALQY (160 aa). Cysteine 119 (cysteine sulfenic acid (-SOH) intermediate) is an active-site residue.

The protein belongs to the peroxiredoxin family. AhpC/Prx1 subfamily. Homodimer; disulfide-linked, upon oxidation.

The protein localises to the plastid. It is found in the chloroplast. The enzyme catalyses a hydroperoxide + [thioredoxin]-dithiol = an alcohol + [thioredoxin]-disulfide + H2O. Thiol-specific peroxidase that catalyzes the reduction of hydrogen peroxide and organic hydroperoxides to water and alcohols, respectively. Plays a role in cell protection against oxidative stress by detoxifying peroxides. May be an antioxidant enzyme particularly in the developing shoot and photosynthesizing leaf. The protein is 2-Cys peroxiredoxin BAS1, chloroplastic (BAS1) of Spinacia oleracea (Spinach).